The sequence spans 365 residues: tRNA/tmRNA (uracil-C(5))-methyltransferase (365 aa).

S-adenosyl-L-methionine is bound by residues Gln-189, Tyr-217, Asn-222, Glu-238, and Asp-298. The active-site Nucleophile is Cys-323. The active-site Proton acceptor is Glu-357.

The protein belongs to the class I-like SAM-binding methyltransferase superfamily. RNA M5U methyltransferase family. TrmA subfamily.

It catalyses the reaction uridine(54) in tRNA + S-adenosyl-L-methionine = 5-methyluridine(54) in tRNA + S-adenosyl-L-homocysteine + H(+). It carries out the reaction uridine(341) in tmRNA + S-adenosyl-L-methionine = 5-methyluridine(341) in tmRNA + S-adenosyl-L-homocysteine + H(+). In terms of biological role, dual-specificity methyltransferase that catalyzes the formation of 5-methyluridine at position 54 (m5U54) in all tRNAs, and that of position 341 (m5U341) in tmRNA (transfer-mRNA). This Psychromonas ingrahamii (strain DSM 17664 / CCUG 51855 / 37) protein is tRNA/tmRNA (uracil-C(5))-methyltransferase.